The primary structure comprises 256 residues: Enolase-phosphatase E1 (256 aa).

Residues Asp14 and Glu16 each contribute to the Mg(2+) site. Substrate contacts are provided by residues 142-143 (SS) and Lys176. Asp201 contributes to the Mg(2+) binding site.

The protein belongs to the HAD-like hydrolase superfamily. MasA/MtnC family. In terms of assembly, monomer. It depends on Mg(2+) as a cofactor.

It localises to the cytoplasm. The protein localises to the nucleus. The enzyme catalyses 5-methylsulfanyl-2,3-dioxopentyl phosphate + H2O = 1,2-dihydroxy-5-(methylsulfanyl)pent-1-en-3-one + phosphate. It participates in amino-acid biosynthesis; L-methionine biosynthesis via salvage pathway; L-methionine from S-methyl-5-thio-alpha-D-ribose 1-phosphate: step 3/6. Its pathway is amino-acid biosynthesis; L-methionine biosynthesis via salvage pathway; L-methionine from S-methyl-5-thio-alpha-D-ribose 1-phosphate: step 4/6. Its function is as follows. Bifunctional enzyme that catalyzes the enolization of 2,3-diketo-5-methylthiopentyl-1-phosphate (DK-MTP-1-P) into the intermediate 2-hydroxy-3-keto-5-methylthiopentenyl-1-phosphate (HK-MTPenyl-1-P), which is then dephosphorylated to form the acireductone 1,2-dihydroxy-3-keto-5-methylthiopentene (DHK-MTPene). This is Enolase-phosphatase E1 from Drosophila sechellia (Fruit fly).